Consider the following 223-residue polypeptide: Deoxyribose-phosphate aldolase (223 aa).

D92 (proton donor/acceptor) is an active-site residue. K158 (schiff-base intermediate with acetaldehyde) is an active-site residue. K188 functions as the Proton donor/acceptor in the catalytic mechanism.

This sequence belongs to the DeoC/FbaB aldolase family. DeoC type 1 subfamily.

The protein localises to the cytoplasm. The catalysed reaction is 2-deoxy-D-ribose 5-phosphate = D-glyceraldehyde 3-phosphate + acetaldehyde. The protein operates within carbohydrate degradation; 2-deoxy-D-ribose 1-phosphate degradation; D-glyceraldehyde 3-phosphate and acetaldehyde from 2-deoxy-alpha-D-ribose 1-phosphate: step 2/2. Its function is as follows. Catalyzes a reversible aldol reaction between acetaldehyde and D-glyceraldehyde 3-phosphate to generate 2-deoxy-D-ribose 5-phosphate. This is Deoxyribose-phosphate aldolase from Mycolicibacterium paratuberculosis (strain ATCC BAA-968 / K-10) (Mycobacterium paratuberculosis).